Consider the following 305-residue polypeptide: MQHPREENSIVVELEPSLATFIKQGFNNLVKWPLLNIGIVLSNTSTAVNEEWLTAVEHIPTMKIFYKHIHKILTREMGFLVYLKRSQSERDNYITLYDFDYYIIDKDTNSVTMVDKPTELKETLLHVFQEYRLKSSQTIELIAFSSGTVINEDIVSKLTFLDVEVFNREYNNVKTIIDPDFVFRSPFIVISPMGKLTFFVEVYSWFDFKSCFKDIIDFLEGALIANIHNHMIKVGNCDETVSSYNPESGMLFVNDLMTMNIVNFFGCNSRLESYHRFDMTKVDVELFIKALSDACKKILSASNRL.

The protein belongs to the poxviridae DNA-directed RNA polymerase 35 kDa subunit family. As to quaternary structure, the DNA-dependent RNA polymerase used for intermediate and late genes expression consists of eight subunits 147 kDa, 133 kDa, 35 kDa, 30 kDa, 22 kDa, 19 kDa, 18 kDa and 7 kDa totalling more than 500 kDa in mass. The same holoenzyme, with the addition of the transcription-specificity factor RAP94, is used for early gene expression.

The protein localises to the virion. It carries out the reaction RNA(n) + a ribonucleoside 5'-triphosphate = RNA(n+1) + diphosphate. Functionally, part of the DNA-dependent RNA polymerase which catalyzes the transcription of viral DNA into RNA using the four ribonucleoside triphosphates as substrates. Responsible for the transcription of early, intermediate and late genes. DNA-dependent RNA polymerase associates with the early transcription factor (ETF), itself composed of D6 and A7, thereby allowing the early genes transcription. Late transcription, and probably also intermediate transcription, require newly synthesized RNA polymerase. The polypeptide is DNA-directed RNA polymerase 35 kDa subunit (RPO35) (Homo sapiens (Human)).